The following is a 295-amino-acid chain: Ribosomal protein L11 methyltransferase (295 aa).

S-adenosyl-L-methionine-binding residues include Thr-150, Gly-171, Asp-193, and Asn-232.

Belongs to the methyltransferase superfamily. PrmA family.

It localises to the cytoplasm. It carries out the reaction L-lysyl-[protein] + 3 S-adenosyl-L-methionine = N(6),N(6),N(6)-trimethyl-L-lysyl-[protein] + 3 S-adenosyl-L-homocysteine + 3 H(+). Methylates ribosomal protein L11. The chain is Ribosomal protein L11 methyltransferase from Neisseria meningitidis serogroup C / serotype 2a (strain ATCC 700532 / DSM 15464 / FAM18).